Consider the following 231-residue polypeptide: RNA pyrophosphohydrolase (231 aa).

The 144-residue stretch at 6–149 folds into the Nudix hydrolase domain; sequence GFRPNVGIIL…KRDVYQLALT (144 aa). Residues 38–59 carry the Nudix box motif; that stretch reads GGIKYGETPVQAMYRELHEETG. Positions 157–190 are disordered; it reads RPQPRTERPGGHHHGQRYPRMASSVNAPPGASMA.

The protein belongs to the Nudix hydrolase family. RppH subfamily. It depends on a divalent metal cation as a cofactor.

Functionally, accelerates the degradation of transcripts by removing pyrophosphate from the 5'-end of triphosphorylated RNA, leading to a more labile monophosphorylated state that can stimulate subsequent ribonuclease cleavage. The chain is RNA pyrophosphohydrolase from Paraburkholderia phymatum (strain DSM 17167 / CIP 108236 / LMG 21445 / STM815) (Burkholderia phymatum).